The primary structure comprises 107 residues: uncharacterized protein (107 aa).

A helical membrane pass occupies residues 12 to 32; that stretch reads IILNIFLALLLVYFIFHCIYG.

Its subcellular location is the membrane. This is an uncharacterized protein from Rickettsia prowazekii (strain Madrid E).